A 324-amino-acid chain; its full sequence is Cyclin-dependent kinase C-3 (324 aa).

Residues 27–320 (FRRIRKIGEG…AHDALCAAYF (294 aa)) form the Protein kinase domain. ATP is bound by residues 33-41 (IGEGTYGEV) and Lys-56. Residue Thr-37 is modified to Phosphothreonine. Residue Tyr-38 is modified to Phosphotyrosine. The Proton acceptor role is filled by Asp-160. A Phosphothreonine modification is found at Thr-193.

Belongs to the protein kinase superfamily. CMGC Ser/Thr protein kinase family. CDC2/CDKX subfamily.

The catalysed reaction is L-seryl-[protein] + ATP = O-phospho-L-seryl-[protein] + ADP + H(+). It catalyses the reaction L-threonyl-[protein] + ATP = O-phospho-L-threonyl-[protein] + ADP + H(+). The enzyme catalyses [DNA-directed RNA polymerase] + ATP = phospho-[DNA-directed RNA polymerase] + ADP + H(+). This chain is Cyclin-dependent kinase C-3 (CDKC-1), found in Oryza sativa subsp. japonica (Rice).